An 800-amino-acid chain; its full sequence is Phosphoinositide 3-kinase adapter protein 1 (800 aa).

The TIR domain maps to 8–145; that stretch reads GGYDVLILYA…AVKKAISEDS (138 aa). Residues 10–144 are necessary and sufficient to mediate inhibition of NF-kappa-B downstream of activated TLRs; it reads YDVLILYASD…EAVKKAISED (135 aa). The DBB domain occupies 185–321; it reads VQPDHIRCGV…NIPASGLHLF (137 aa). A Phosphotyrosine modification is found at Tyr266. Phosphotyrosine; by SYK occurs at positions 423, 448, and 463. The segment at 527–548 is disordered; that stretch reads EMASRPPVPVPRPESSSPQPDN. A coiled-coil region spans residues 643–663; it reads QQENLKRLRDSITRRQMEKQK. Residues 702-713 show a composition bias toward basic and acidic residues; sequence PKKELKRGDWKT. The tract at residues 702–800 is disordered; the sequence is PKKELKRGDW…YPPPVPPRGR (99 aa). Residues 714-737 show a composition bias toward low complexity; the sequence is ESTSSTTSSASNRSSTRSILSVSS. Residues 749–759 are compositionally biased toward polar residues; it reads SEASRSRSPIP. 2 stretches are compositionally biased toward pro residues: residues 767–777 and 791–800; these read LPLPERPPRVP and YPPPVPPRGR.

Homooligomer. Interacts (phosphorylated on tyrosine residues within YXXM motifs) with PIK3R1 (via SH2 domain); required for BCR- and TLR-mediated activation of phosphoinositide 3-kinase. Post-translationally, constitutively phosphorylated. Phosphorylated on tyrosine residues within the YXXM motifs by BTK and SYK. Isoform 1 and isoform 2 are phosphorylated on tyrosine residues, most likely within the YXXM motifs, via CD19 activation.

The protein resides in the cytoplasm. It is found in the cell membrane. In terms of biological role, signaling adapter that contributes to B-cell development by linking B-cell receptor (BCR) signaling to the phosphoinositide 3-kinase (PI3K)-Akt signaling pathway. Has a complementary role to the BCR coreceptor CD19, coupling BCR and PI3K activation by providing a docking site for the PI3K subunit PIK3R1. Alternatively, links Toll-like receptor (TLR) signaling to PI3K activation, a process preventing excessive inflammatory cytokine production. Also involved in the activation of PI3K in natural killer cells. May be involved in the survival of mature B-cells via activation of REL. The chain is Phosphoinositide 3-kinase adapter protein 1 (PIK3AP1) from Gallus gallus (Chicken).